The sequence spans 49 residues: Large ribosomal subunit protein bL33 (49 aa).

The protein belongs to the bacterial ribosomal protein bL33 family.

In Clostridium botulinum (strain ATCC 19397 / Type A), this protein is Large ribosomal subunit protein bL33.